A 181-amino-acid polypeptide reads, in one-letter code: Transcriptional repressor NrdR (181 aa).

A zinc finger lies at 3 to 34 (CPYCQHTDSRVLESRSTGAGRSIRRRRECLSC). In terms of domain architecture, ATP-cone spans 49-139 (ISVIKRNGQS…VYRQFQGVDD (91 aa)).

It belongs to the NrdR family. It depends on Zn(2+) as a cofactor.

Functionally, negatively regulates transcription of bacterial ribonucleotide reductase nrd genes and operons by binding to NrdR-boxes. This Picosynechococcus sp. (strain ATCC 27264 / PCC 7002 / PR-6) (Agmenellum quadruplicatum) protein is Transcriptional repressor NrdR.